The following is a 409-amino-acid chain: Glutamate--tRNA ligase 2 (409 aa).

Residues 9 to 19 (PSPTGNLHIGG) carry the 'HIGH' region motif. A 'KMSKS' region motif is present at residues 198–202 (KLSKR). Position 201 (Lys201) interacts with ATP.

This sequence belongs to the class-I aminoacyl-tRNA synthetase family. Glutamate--tRNA ligase type 1 subfamily. Monomer.

It localises to the cytoplasm. The enzyme catalyses tRNA(Glu) + L-glutamate + ATP = L-glutamyl-tRNA(Glu) + AMP + diphosphate. Catalyzes the attachment of glutamate to tRNA(Glu) in a two-step reaction: glutamate is first activated by ATP to form Glu-AMP and then transferred to the acceptor end of tRNA(Glu). This chain is Glutamate--tRNA ligase 2, found in Neorickettsia sennetsu (strain ATCC VR-367 / Miyayama) (Ehrlichia sennetsu).